The following is a 692-amino-acid chain: Potassium-transporting ATPase ATP-binding subunit (692 aa).

Helical transmembrane passes span 35 to 55, 64 to 84, 213 to 233, and 254 to 274; these read VMFI…KDLY, LQIS…EAIA, IALT…VMSL, and ILIS…LSAI. The active-site 4-aspartylphosphate intermediate is Asp307. Residues Asp344, Glu348, 377 to 384, and Lys400 each bind ATP; that span reads FSASTKMS. Mg(2+)-binding residues include Asp523 and Asp527. 3 consecutive transmembrane segments (helical) span residues 592–612, 626–646, and 672–692; these read YFAI…VGPL, AVLS…PLAL, and MVIP…LGII.

Belongs to the cation transport ATPase (P-type) (TC 3.A.3) family. Type IA subfamily. As to quaternary structure, the system is composed of three essential subunits: KdpA, KdpB and KdpC.

The protein localises to the cell inner membrane. It catalyses the reaction K(+)(out) + ATP + H2O = K(+)(in) + ADP + phosphate + H(+). Part of the high-affinity ATP-driven potassium transport (or Kdp) system, which catalyzes the hydrolysis of ATP coupled with the electrogenic transport of potassium into the cytoplasm. This subunit is responsible for energy coupling to the transport system and for the release of the potassium ions to the cytoplasm. The polypeptide is Potassium-transporting ATPase ATP-binding subunit (Leptospira interrogans serogroup Icterohaemorrhagiae serovar Lai (strain 56601)).